Reading from the N-terminus, the 210-residue chain is Acetoin utilization protein AcuA (210 aa).

The region spanning 19-189 (VLIEGPISPE…ANCLMARIGK (171 aa)) is the N-acetyltransferase domain.

It belongs to the acetyltransferase family. Monomer.

The protein operates within ketone degradation; acetoin degradation. Its function is as follows. Part of the acuABC operon, which is possibly involved in the breakdown of acetoin and butanediol. Acts as an acetyltransferase inactivating acetyl-CoA synthetase AcsA via acetylation at a Lys residue. This is Acetoin utilization protein AcuA from Bacillus licheniformis (strain ATCC 14580 / DSM 13 / JCM 2505 / CCUG 7422 / NBRC 12200 / NCIMB 9375 / NCTC 10341 / NRRL NRS-1264 / Gibson 46).